Reading from the N-terminus, the 471-residue chain is Pachytene checkpoint protein 2 homolog (471 aa).

213–220 is a binding site for ATP; it reads GPPGTGKT.

Belongs to the AAA ATPase family. PCH2 subfamily.

Its function is as follows. Plays a key role in chromosome recombination during meiosis. In Oryza sativa subsp. indica (Rice), this protein is Pachytene checkpoint protein 2 homolog.